Consider the following 381-residue polypeptide: Alkanesulfonate monooxygenase (381 aa).

This sequence belongs to the SsuD family. In terms of assembly, homotetramer.

The enzyme catalyses an alkanesulfonate + FMNH2 + O2 = an aldehyde + FMN + sulfite + H2O + 2 H(+). In terms of biological role, catalyzes the desulfonation of aliphatic sulfonates. The sequence is that of Alkanesulfonate monooxygenase from Escherichia fergusonii (strain ATCC 35469 / DSM 13698 / CCUG 18766 / IAM 14443 / JCM 21226 / LMG 7866 / NBRC 102419 / NCTC 12128 / CDC 0568-73).